The following is a 446-amino-acid chain: Glycerol-3-phosphate acyltransferase 3 (446 aa).

The next 3 membrane-spanning stretches (helical) occupy residues 11–31 (IFIIWLTLVIVLILLPSMFGS), 146–166 (LRVTLIWVLGLCVRYCILLPL), and 168–188 (ITLATIGISWLVLGATLVGQL). The HXXXXD motif signature appears at 236 to 241 (HTSPID).

This sequence belongs to the 1-acyl-sn-glycerol-3-phosphate acyltransferase family.

It localises to the endoplasmic reticulum membrane. It carries out the reaction sn-glycerol 3-phosphate + an acyl-CoA = a 1-acyl-sn-glycero-3-phosphate + CoA. The catalysed reaction is a 1-acyl-sn-glycero-3-phosphate + an acyl-CoA = a 1,2-diacyl-sn-glycero-3-phosphate + CoA. The enzyme catalyses dodecanoyl-CoA + sn-glycerol 3-phosphate = 1-dodecanoyl-sn-glycerol 3-phosphate + CoA. It catalyses the reaction sn-glycerol 3-phosphate + hexadecanoyl-CoA = 1-hexadecanoyl-sn-glycero-3-phosphate + CoA. It carries out the reaction sn-glycerol 3-phosphate + (9Z)-octadecenoyl-CoA = 1-(9Z-octadecenoyl)-sn-glycero-3-phosphate + CoA. The catalysed reaction is (9Z,12Z)-octadecadienoyl-CoA + sn-glycerol 3-phosphate = 1-(9Z,12Z)-octadecadienoyl-sn-glycero-3-phosphate + CoA. The enzyme catalyses 1-tetradecanoyl-sn-glycerol 3-phosphate + (9Z)-octadecenoyl-CoA = 1-tetradecanoyl-2-(9Z)-octadecenoyl-sn-glycero-3-phosphate + CoA. It catalyses the reaction 1-hexadecanoyl-sn-glycero-3-phosphate + (9Z)-octadecenoyl-CoA = 1-hexadecanoyl-2-(9Z-octadecenoyl)-sn-glycero-3-phosphate + CoA. It carries out the reaction 1-(9Z-octadecenoyl)-sn-glycero-3-phosphate + (9Z)-octadecenoyl-CoA = 1,2-di-(9Z-octadecenoyl)-sn-glycero-3-phosphate + CoA. The catalysed reaction is 1-(6Z,9Z,12Z-octadecatrienoyl)-sn-glycero-3-phosphate + (9Z)-octadecenoyl-CoA = (6Z,9Z,12Z)-octadecatrienoyl-2-(9Z)-octadecenoyl-sn-glycero-3-phosphate + CoA. The enzyme catalyses 1-(9Z,12Z,15Z)-octadecatrienoyl-sn-glycero-3-phosphate + (9Z)-octadecenoyl-CoA = 1-(9Z,12Z,15Z)-octadecatrienoyl-2-(9Z)-octadecenoyl-sn-glycero-3-phosphate + CoA. It catalyses the reaction 1-(9Z-octadecenoyl)-sn-glycero-3-phosphate + tetradecanoyl-CoA = 1-(9Z)-octadecenoyl-2-tetradecanoyl-sn-glycero-3-phosphate + CoA. It carries out the reaction 1-(9Z-octadecenoyl)-sn-glycero-3-phosphate + hexadecanoyl-CoA = 1-(9Z)-octadecenoyl-2-hexadecanoyl-sn-glycero-3-phosphate + CoA. The catalysed reaction is 1-(9Z-octadecenoyl)-sn-glycero-3-phosphate + octadecanoyl-CoA = 1-(9Z-octadecenoyl)-2-octadecanoyl-sn-glycero-3-phosphate + CoA. The enzyme catalyses 1-(9Z-octadecenoyl)-sn-glycero-3-phosphate + (9Z,12Z)-octadecadienoyl-CoA = 1-(9Z)-octadecenoyl-2-(9Z,12Z)-octadecadienoyl-sn-glycero-3-phosphate + CoA. It catalyses the reaction 1-(5Z,8Z,11Z,14Z-eicosatetraenoyl)-sn-glycero-3-phosphate + (9Z)-octadecenoyl-CoA = 1-(5Z,8Z,11Z,14Z)-eicosatetraenoyl-2-(9Z)-octadecenoyl-sn-glycero-3-phosphate + CoA. It participates in glycerolipid metabolism; triacylglycerol biosynthesis. Its pathway is phospholipid metabolism; CDP-diacylglycerol biosynthesis; CDP-diacylglycerol from sn-glycerol 3-phosphate: step 1/3. Its function is as follows. Converts glycerol-3-phosphate to 1-acyl-sn-glycerol-3-phosphate (lysophosphatidic acid or LPA) by incorporating an acyl moiety at the sn-1 position of the glycerol backbone. Also converts LPA into 1,2-diacyl-sn-glycerol-3-phosphate (phosphatidic acid or PA) by incorporating an acyl moiety at the sn-2 position of the glycerol backbone. Protects cells against lipotoxicity. The protein is Glycerol-3-phosphate acyltransferase 3 of Xenopus laevis (African clawed frog).